The primary structure comprises 269 residues: Cytochrome c oxidase subunit 3 (269 aa).

Residues methionine 1 to tryptophan 22 are Mitochondrial matrix-facing. A helical transmembrane segment spans residues proline 23–methionine 41. Residues histidine 42–histidine 48 lie on the Mitochondrial intermembrane side of the membrane. Residues tyrosine 49–glycine 73 form a helical membrane-spanning segment. The Mitochondrial matrix portion of the chain corresponds to threonine 74–threonine 80. Residues leucine 81–leucine 114 form a helical membrane-spanning segment. Over threonine 115–leucine 137 the chain is Mitochondrial intermembrane. The helical transmembrane segment at proline 138 to lysine 161 threads the bilayer. At glycine 162–arginine 164 the chain is on the mitochondrial matrix side. The chain crosses the membrane as a helical span at residues glutamate 165–glutamate 188. Over tyrosine 189 to phenylalanine 201 the chain is Mitochondrial intermembrane. A helical transmembrane segment spans residues glycine 202–isoleucine 230. Residues phenylalanine 231–leucine 248 are Mitochondrial matrix-facing. A helical membrane pass occupies residues tyrosine 249 to tyrosine 265. At tyrosine 266–serine 269 the chain is on the mitochondrial intermembrane side.

Belongs to the cytochrome c oxidase subunit 3 family. Component of the cytochrome c oxidase (complex IV, CIV), a multisubunit enzyme composed of 11 subunits. The complex is composed of a catalytic core of 3 subunits Cox1, Cox2 and Cox3, encoded in the mitochondrial DNA, and 8 supernumerary subunits Cox4, Cox5a/Cox5, Cox6, Cox7, Cox8, Cox7a/Cox9, Cox6b/Cox12 and Cox6a/Cox13, which are encoded in the nuclear genome. The complex exists as a monomer or a dimer and forms respiratory supercomplexes (SCs) in the inner mitochondrial membrane with NADH-ubiquinone oxidoreductase (complex I, CI) and ubiquinol-cytochrome c oxidoreductase (cytochrome b-c1 complex, complex III, CIII), resulting in various different assemblies (supercomplexes I(1)IV(1), I(1)III(3)IV(2), III(2)IV(1) and III(2)IV(2) as well as larger supercomplexes of compositions like I(1)III(2)IV(5-6)).

It localises to the mitochondrion inner membrane. It catalyses the reaction 4 Fe(II)-[cytochrome c] + O2 + 8 H(+)(in) = 4 Fe(III)-[cytochrome c] + 2 H2O + 4 H(+)(out). Functionally, component of the cytochrome c oxidase, the last enzyme in the mitochondrial electron transport chain which drives oxidative phosphorylation. The respiratory chain contains 3 multisubunit complexes succinate dehydrogenase (complex II, CII), ubiquinol-cytochrome c oxidoreductase (cytochrome b-c1 complex, complex III, CIII) and cytochrome c oxidase (complex IV, CIV), that cooperate to transfer electrons derived from NADH and succinate to molecular oxygen, creating an electrochemical gradient over the inner membrane that drives transmembrane transport and the ATP synthase. Cytochrome c oxidase is the component of the respiratory chain that catalyzes the reduction of oxygen to water. Electrons originating from reduced cytochrome c in the intermembrane space (IMS) are transferred via the dinuclear copper A center (CU(A)) of Cox2 and heme A of Cox1 to the active site in Cox1, a binuclear center (BNC) formed by heme A3 and copper B (CU(B)). The BNC reduces molecular oxygen to 2 water molecules using 4 electrons from cytochrome c in the IMS and 4 protons from the mitochondrial matrix. This is Cytochrome c oxidase subunit 3 (cox-3) from Neurospora crassa (strain ATCC 24698 / 74-OR23-1A / CBS 708.71 / DSM 1257 / FGSC 987).